A 132-amino-acid polypeptide reads, in one-letter code: Histone H2B.1 (132 aa).

Positions 1-13 are enriched in low complexity; that stretch reads MSAKASKAPASKA. The tract at residues 1 to 39 is disordered; sequence MSAKASKAPASKAPAEKKPAAKKTSSSTDPSKKRTKARK. Lys-7 is subject to N6-acetyllysine; alternate. Residue Lys-7 forms a Glycyl lysine isopeptide (Lys-Gly) (interchain with G-Cter in SUMO); alternate linkage. A Phosphoserine modification is found at Ser-11. The residue at position 12 (Lys-12) is an N6-acetyllysine. N6-acetyllysine; alternate is present on Lys-17. Residue Lys-17 forms a Glycyl lysine isopeptide (Lys-Gly) (interchain with G-Cter in SUMO); alternate linkage. Lys-18 participates in a covalent cross-link: Glycyl lysine isopeptide (Lys-Gly) (interchain with G-Cter in SUMO). A Glycyl lysine isopeptide (Lys-Gly) (interchain with G-Cter in ubiquitin) cross-link involves residue Lys-125.

The protein belongs to the histone H2B family. As to quaternary structure, the nucleosome is a histone octamer containing two molecules each of H2A, H2B, H3 and H4 assembled in one H3-H4 heterotetramer and two H2A-H2B heterodimers. The octamer wraps approximately 147 bp of DNA. Post-translationally, monoubiquitinated by the UBC2-BRE1 complex to form H2BK123ub1. H2BK123ub1 gives a specific tag for epigenetic transcriptional activation and is also prerequisite for H3K4me and H3K79me formation. H2BK123ub1 also modulates the formation of double-strand breaks during meiosis and is a prerequisite for DNA-damage checkpoint activation. In terms of processing, phosphorylated by STE20 to form H2BS10ph during progression through meiotic prophase. May be correlated with chromosome condensation. Acetylated by GCN5 to form H2BK11ac and H2BK16ac. H2BK16ac can also be formed by ESA1. Acetylation of N-terminal lysines and particularly formation of H2BK11acK16ac has a positive effect on transcription. Post-translationally, sumoylation to form H2BK6su and probably also H2BK16su or H2BK17su, occurs preferentially near the telomeres and represses gene transcription.

It localises to the nucleus. The protein localises to the chromosome. Core component of nucleosome. Nucleosomes wrap and compact DNA into chromatin, limiting DNA accessibility to the cellular machineries which require DNA as a template. Histones thereby play a central role in transcription regulation, DNA repair, DNA replication and chromosomal stability. DNA accessibility is regulated via a complex set of post-translational modifications of histones, also called histone code, and nucleosome remodeling. The sequence is that of Histone H2B.1 (HTB1) from Kluyveromyces lactis (strain ATCC 8585 / CBS 2359 / DSM 70799 / NBRC 1267 / NRRL Y-1140 / WM37) (Yeast).